Reading from the N-terminus, the 277-residue chain is Diaminopimelate epimerase (277 aa).

The substrate site is built by asparagine 13, glutamine 46, and asparagine 65. Cysteine 74 (proton donor) is an active-site residue. Substrate-binding positions include 75–76, asparagine 158, asparagine 191, and 209–210; these read GN and ER. Residue cysteine 218 is the Proton acceptor of the active site. 219-220 provides a ligand contact to substrate; the sequence is GT.

This sequence belongs to the diaminopimelate epimerase family. In terms of assembly, homodimer.

It is found in the cytoplasm. The catalysed reaction is (2S,6S)-2,6-diaminopimelate = meso-2,6-diaminopimelate. The protein operates within amino-acid biosynthesis; L-lysine biosynthesis via DAP pathway; DL-2,6-diaminopimelate from LL-2,6-diaminopimelate: step 1/1. Its function is as follows. Catalyzes the stereoinversion of LL-2,6-diaminopimelate (L,L-DAP) to meso-diaminopimelate (meso-DAP), a precursor of L-lysine and an essential component of the bacterial peptidoglycan. The sequence is that of Diaminopimelate epimerase from Nitrosospira multiformis (strain ATCC 25196 / NCIMB 11849 / C 71).